The chain runs to 360 residues: Actin-like protein MamK (360 aa).

ATP-binding positions include Lys-22, 33 to 34 (TS), and Asp-89. Mg(2+) is bound at residue Glu-156. Residues 177–179 (AGT), 231–235 (KEQFS), and Gly-302 contribute to the ATP site.

It belongs to the FtsA/MreB family. MamK subfamily. Forms cytoplasmic filaments. Interacts with MamJ. Forms filaments in the absence of other magnetosome proteins and in E.coli. Filament formation in vitro requires ATP, GTP or a non-hydrolyzable ATP analog.

It localises to the cytoplasm. It is found in the cytoskeleton. It catalyses the reaction ATP + H2O = ADP + phosphate + H(+). Filament dynamics depend partially on MamJ. Functionally, protein with ATPase activity which forms dynamic cytoplasmic filaments that are involved in sorting, concatenating and/or correctly positioning of magnetosomes in the cell. Not absolutely necessary for assembly of short chains. Filaments grow from the both cell poles towards midcell, and are probably disassembled at the other end of the cell, a process known as treadmilling. Polymerizes in the presence of ATP, GTP or a non-hydrolyzable ATP analog. Required for correct segregation and positioning of magnetosomes following cell division. This Magnetospirillum gryphiswaldense (strain DSM 6361 / JCM 21280 / NBRC 15271 / MSR-1) protein is Actin-like protein MamK.